Reading from the N-terminus, the 522-residue chain is Protein tweety homolog 3 (522 aa).

Topologically, residues 1–43 (MAAAISYTPPWWVNLLHRLPHLNLQWESLNGDFRPEDPDYQQS) are extracellular. Residues 44-64 (LMLLACVALSCLALDLLFLLF) traverse the membrane as a helical segment. At 65–87 (YSFWFCCRHRKTEENTNADCCCT) the chain is on the cytoplasmic side. Residues 88–108 (VWCVIVATLVCSAGIAVGFYG) traverse the membrane as a helical segment. Over 109–211 (NGETSDGIHR…VDLFDWYRWL (103 aa)) the chain is Extracellular. Ca(2+) contacts are provided by E111 and D114. N127 and N145 each carry an N-linked (GlcNAc...) asparagine glycan. Residues 212 to 232 (GYLGLLLFHVFICLLVLFGLI) traverse the membrane as a helical segment. The Cytoplasmic portion of the chain corresponds to 233–238 (RNSKGT). The helical transmembrane segment at 239 to 259 (LICVCFLGMMALIISWASMGL) threads the bilayer. Topologically, residues 260-386 (ELAVAVGSSD…LTGFCYDGVE (127 aa)) are extracellular. 2 disulfides stabilise this stretch: C271–C381 and C299–C366. A glycan (N-linked (GlcNAc...) asparagine) is linked at N351. The helical transmembrane segment at 387-407 (GLIYLVLFSFVTALMFSSIVC) threads the bilayer. Residues 408-522 (SVPHTWQQRR…TNRPETDPVH (115 aa)) are Cytoplasmic-facing. Positions 483–522 (QNPRCENTPLIGRESPPPSYTSSMRAKYLATNRPETDPVH) are disordered.

Belongs to the tweety family. Homotetramer; disulfide-linked. Forms cis-homodimers in the presence of Ca(2+).

Its subcellular location is the cell membrane. The enzyme catalyses chloride(in) = chloride(out). It catalyses the reaction L-glutamate(out) = L-glutamate(in). In terms of biological role, may act as a calcium-independent, swelling-dependent volume-regulated anion channel (VRAC-swell) which plays a pivotal role in the process of regulatory volume decrease (RVD) in the brain through the efflux of anions like chloride and organic osmolytes like glutamate. Probable large-conductance Ca(2+)-activated chloride channel. The polypeptide is Protein tweety homolog 3 (ttyh3) (Xenopus laevis (African clawed frog)).